A 65-amino-acid chain; its full sequence is 7 kDa A-type inclusion protein (65 aa).

The span at 1 to 20 shows a compositional bias: polar residues; sequence MSNQNIPQLSEYQTSVSQVA. The tract at residues 1-32 is disordered; that stretch reads MSNQNIPQLSEYQTSVSQVAVTPPPKPKTPQI.

In Bos taurus (Bovine), this protein is 7 kDa A-type inclusion protein.